Here is a 92-residue protein sequence, read N- to C-terminus: Small ribosomal subunit protein uS19c (92 aa).

Belongs to the universal ribosomal protein uS19 family.

The protein resides in the plastid. It localises to the chloroplast. In terms of biological role, protein S19 forms a complex with S13 that binds strongly to the 16S ribosomal RNA. The sequence is that of Small ribosomal subunit protein uS19c from Fagopyrum esculentum subsp. ancestrale (Wild buckwheat).